The chain runs to 507 residues: Maturase K (507 aa).

It belongs to the intron maturase 2 family. MatK subfamily.

The protein resides in the plastid. Its subcellular location is the chloroplast. Its function is as follows. Usually encoded in the trnK tRNA gene intron. Probably assists in splicing its own and other chloroplast group II introns. This chain is Maturase K, found in Cananga odorata (Ylang-ylang tree).